Consider the following 122-residue polypeptide: Large ribosomal subunit protein uL14 (122 aa).

The protein belongs to the universal ribosomal protein uL14 family. In terms of assembly, part of the 50S ribosomal subunit. Forms a cluster with proteins L3 and L19. In the 70S ribosome, L14 and L19 interact and together make contacts with the 16S rRNA in bridges B5 and B8.

Its function is as follows. Binds to 23S rRNA. Forms part of two intersubunit bridges in the 70S ribosome. The protein is Large ribosomal subunit protein uL14 of Oleidesulfovibrio alaskensis (strain ATCC BAA-1058 / DSM 17464 / G20) (Desulfovibrio alaskensis).